The following is a 739-amino-acid chain: Catalase-peroxidase 2 (739 aa).

The first 26 residues, 1–26 (MKKSTIPTLSALTLAMSLAFGGSVIA), serve as a signal peptide directing secretion. The tryptophyl-tyrosyl-methioninium (Trp-Tyr) (with M-253) cross-link spans 105 to 227 (WHSAGVYRIF…MGATQMGLIY (123 aa)). H106 serves as the catalytic Proton acceptor. A cross-link (tryptophyl-tyrosyl-methioninium (Tyr-Met) (with W-105)) is located at residues 227–253 (YVNPEGPNGVPDPLASAKEIRDTFGRM). H268 contacts heme b.

The protein belongs to the peroxidase family. Peroxidase/catalase subfamily. In terms of assembly, homodimer or homotetramer. Heme b is required as a cofactor. Post-translationally, formation of the three residue Trp-Tyr-Met cross-link is important for the catalase, but not the peroxidase activity of the enzyme.

The enzyme catalyses H2O2 + AH2 = A + 2 H2O. It carries out the reaction 2 H2O2 = O2 + 2 H2O. Functionally, bifunctional enzyme with both catalase and broad-spectrum peroxidase activity. The chain is Catalase-peroxidase 2 from Shewanella sp. (strain MR-7).